We begin with the raw amino-acid sequence, 827 residues long: uncharacterized protein (827 aa).

This is an uncharacterized protein from Methanocaldococcus jannaschii (strain ATCC 43067 / DSM 2661 / JAL-1 / JCM 10045 / NBRC 100440) (Methanococcus jannaschii).